A 120-amino-acid polypeptide reads, in one-letter code: UPF0344 protein lin2366 (120 aa).

A run of 4 helical transmembrane segments spans residues 3-23 (GYVH…ALLI), 33-53 (MLQM…IMMV), 62-82 (ILAI…EMLL), and 92-112 (GMFL…GFYL).

This sequence belongs to the UPF0344 family.

The protein localises to the cell membrane. This chain is UPF0344 protein lin2366, found in Listeria innocua serovar 6a (strain ATCC BAA-680 / CLIP 11262).